The following is a 333-amino-acid chain: GTPase Obg (333 aa).

The 159-residue stretch at M1–L159 folds into the Obg domain. The region spanning A160–G328 is the OBG-type G domain. GTP is bound by residues G166–S173, F191–V195, D213–G216, N280–D283, and S309–V311. S173 and T193 together coordinate Mg(2+).

The protein belongs to the TRAFAC class OBG-HflX-like GTPase superfamily. OBG GTPase family. Monomer. The cofactor is Mg(2+).

Its subcellular location is the cytoplasm. Functionally, an essential GTPase which binds GTP, GDP and possibly (p)ppGpp with moderate affinity, with high nucleotide exchange rates and a fairly low GTP hydrolysis rate. Plays a role in control of the cell cycle, stress response, ribosome biogenesis and in those bacteria that undergo differentiation, in morphogenesis control. This chain is GTPase Obg, found in Thermosynechococcus vestitus (strain NIES-2133 / IAM M-273 / BP-1).